The primary structure comprises 190 residues: Venom nerve growth factor (190 aa).

The first 7 residues, 1 to 7 (FLIGIWA), serve as a signal peptide directing secretion. Positions 8–111 (APKSEDNVPL…SLNRNIRAKR (104 aa)) are excised as a propeptide. An intrachain disulfide couples Cys-125 to Cys-190. An N-linked (GlcNAc...) asparagine glycan is attached at Asn-134.

The protein belongs to the NGF-beta family. As to quaternary structure, homodimer; non-covalently linked. Glycosylated. As to expression, expressed by the venom gland.

The protein resides in the secreted. Its function is as follows. Nerve growth factor is important for the development and maintenance of the sympathetic and sensory nervous systems. It stimulates division and differentiation of sympathetic and embryonic sensory neurons as well as basal forebrain cholinergic neurons in the brain. Its relevance in the snake venom is not clear. However, it has been shown to inhibit metalloproteinase-dependent proteolysis of platelet glycoprotein Ib alpha, suggesting a metalloproteinase inhibition to prevent metalloprotease autodigestion and/or protection against prey proteases. Binds a lipid between the two protein chains in the homodimer. The lipid-bound form promotes histamine relase from mouse mast cells, contrary to the lipid-free form. The polypeptide is Venom nerve growth factor (Agkistrodon contortrix contortrix (Southern copperhead)).